The following is a 367-amino-acid chain: Glutamate 5-kinase (367 aa).

Lysine 10 contributes to the ATP binding site. Positions 50, 137, and 149 each coordinate substrate. ATP contacts are provided by residues 169 to 170 and 211 to 217; these read TD and TGGMSTK. In terms of domain architecture, PUA spans 275–353; it reads AGEITVDDGA…QQIAEILGYE (79 aa).

This sequence belongs to the glutamate 5-kinase family.

Its subcellular location is the cytoplasm. It carries out the reaction L-glutamate + ATP = L-glutamyl 5-phosphate + ADP. Its pathway is amino-acid biosynthesis; L-proline biosynthesis; L-glutamate 5-semialdehyde from L-glutamate: step 1/2. Its function is as follows. Catalyzes the transfer of a phosphate group to glutamate to form L-glutamate 5-phosphate. The chain is Glutamate 5-kinase from Pectobacterium atrosepticum (strain SCRI 1043 / ATCC BAA-672) (Erwinia carotovora subsp. atroseptica).